A 500-amino-acid chain; its full sequence is Maturase K (500 aa).

It belongs to the intron maturase 2 family. MatK subfamily.

It is found in the plastid. The protein localises to the chloroplast. In terms of biological role, usually encoded in the trnK tRNA gene intron. Probably assists in splicing its own and other chloroplast group II introns. The chain is Maturase K from Fragaria vesca (Woodland strawberry).